A 133-amino-acid polypeptide reads, in one-letter code: Ribosome-binding factor A (133 aa).

The protein belongs to the RbfA family. In terms of assembly, monomer. Binds 30S ribosomal subunits, but not 50S ribosomal subunits or 70S ribosomes.

Its subcellular location is the cytoplasm. Functionally, one of several proteins that assist in the late maturation steps of the functional core of the 30S ribosomal subunit. Associates with free 30S ribosomal subunits (but not with 30S subunits that are part of 70S ribosomes or polysomes). Required for efficient processing of 16S rRNA. May interact with the 5'-terminal helix region of 16S rRNA. The protein is Ribosome-binding factor A of Shigella boydii serotype 18 (strain CDC 3083-94 / BS512).